Consider the following 318-residue polypeptide: Pantothenate kinase (318 aa).

96–103 (GSVAVGKS) lines the ATP pocket.

It belongs to the prokaryotic pantothenate kinase family.

It is found in the cytoplasm. The catalysed reaction is (R)-pantothenate + ATP = (R)-4'-phosphopantothenate + ADP + H(+). Its pathway is cofactor biosynthesis; coenzyme A biosynthesis; CoA from (R)-pantothenate: step 1/5. The sequence is that of Pantothenate kinase from Coxiella burnetii (strain CbuK_Q154) (Coxiella burnetii (strain Q154)).